Reading from the N-terminus, the 831-residue chain is Periplasmic nitrate reductase (831 aa).

Positions 1–29 (MTLTRRDLIKAQAAATAAAAAGLPVSALA) form a signal peptide, tat-type signal. The 57-residue stretch at 41 to 97 (IRWSKAPCRFCGTGCGVMVGTRDGQVVATHGDTQAEVNRGLNCVKGYFLSKIMYGED) folds into the 4Fe-4S Mo/W bis-MGD-type domain. [4Fe-4S] cluster is bound by residues Cys48, Cys51, Cys55, and Cys83. Mo-bis(molybdopterin guanine dinucleotide) is bound by residues Lys85, Gln152, Asn177, Cys181, 214-221 (WGSNMAEM), 245-249 (STFTH), 264-266 (GTD), Met375, Gln379, Asn485, 511-512 (SD), Lys534, Asp561, and 721-730 (TGRVLEHWHS). Trp797 contributes to the substrate binding site. Mo-bis(molybdopterin guanine dinucleotide) is bound by residues Asn805 and Lys822.

It belongs to the prokaryotic molybdopterin-containing oxidoreductase family. NasA/NapA/NarB subfamily. In terms of assembly, component of the periplasmic nitrate reductase NapAB complex composed of NapA and NapB. Requires [4Fe-4S] cluster as cofactor. Mo-bis(molybdopterin guanine dinucleotide) serves as cofactor. Post-translationally, predicted to be exported by the Tat system. The position of the signal peptide cleavage has not been experimentally proven.

The protein resides in the periplasm. It carries out the reaction 2 Fe(II)-[cytochrome] + nitrate + 2 H(+) = 2 Fe(III)-[cytochrome] + nitrite + H2O. Functionally, catalytic subunit of the periplasmic nitrate reductase complex NapAB. Receives electrons from NapB and catalyzes the reduction of nitrate to nitrite. The sequence is that of Periplasmic nitrate reductase from Cereibacter sphaeroides (strain ATCC 17023 / DSM 158 / JCM 6121 / CCUG 31486 / LMG 2827 / NBRC 12203 / NCIMB 8253 / ATH 2.4.1.) (Rhodobacter sphaeroides).